The following is an 805-amino-acid chain: Angiotensin-converting enzyme 2 (805 aa).

Positions 1–17 are cleaved as a signal peptide; sequence MSGSSWLLLSLVAVTAA. Residues 18-740 are Extracellular-facing; the sequence is QSTIEEQAKT…LGPPNQPPVS (723 aa). In terms of domain architecture, Peptidase M2 spans 19 to 607; that stretch reads STIEEQAKTF…QNKNSFVGWS (589 aa). N-linked (GlcNAc...) asparagine glycosylation is found at Asn53, Asn90, and Asn103. A disulfide bond links Cys133 and Cys141. Arg169 lines the chloride pocket. Arg273 is a binding site for substrate. Residue Asn322 is glycosylated (N-linked (GlcNAc...) asparagine). Cys344 and Cys361 form a disulfide bridge. Residue 345 to 346 participates in substrate binding; sequence HP. His374 contacts Zn(2+). Glu375 acts as the Proton acceptor in catalysis. The Zn(2+) site is built by His378 and Glu402. A glycan (N-linked (GlcNAc...) asparagine) is linked at Asn432. Residues Trp477 and Lys481 each coordinate chloride. His505 serves as the catalytic Proton donor. Substrate is bound at residue Tyr515. An intrachain disulfide couples Cys530 to Cys542. Asn546 is a glycosylation site (N-linked (GlcNAc...) asparagine). Residues 614–805 enclose the Collectrin-like domain; it reads ADQSIKVRIS…QNTDDVQTSF (192 aa). The tract at residues 652 to 659 is essential for cleavage by ADAM17; sequence RKYFLEVK. Residue Asn690 is glycosylated (N-linked (GlcNAc...) asparagine). Residues 697–716 form an essential for cleavage by TMPRSS11D and TMPRSS2 region; sequence RTEVEKAIRMSRSRINDAFR. Residues 741–761 form a helical membrane-spanning segment; the sequence is IWLIVFGVVMGVIVVGIVVLI. At 762 to 805 the chain is on the cytoplasmic side; sequence FTGIRDRKKKNKARNEENPYASIDISKGENNPGFQNTDDVQTSF. The tract at residues 772–805 is disordered; it reads NKARNEENPYASIDISKGENNPGFQNTDDVQTSF. The LIR signature appears at 778-786; that stretch reads ENPYASIDI. Tyr781 carries the phosphotyrosine modification. The Endocytic sorting signal motif lies at 781 to 784; the sequence is YASI. The SH2-binding signature appears at 781–785; it reads YASID. Phosphoserine is present on Ser783. Residue Lys788 forms a Glycyl lysine isopeptide (Lys-Gly) (interchain with G-Cter in ubiquitin) linkage. Residues 789 to 805 show a composition bias toward polar residues; that stretch reads GENNPGFQNTDDVQTSF. The short motif at 792-795 is the PTB element; that stretch reads NPGF. Positions 803–805 match the PDZ-binding motif; sequence TSF.

This sequence belongs to the peptidase M2 family. Homodimer. Interacts with the catalytically active form of TMPRSS2. Interacts with SLC6A19; this interaction is essential for expression and function of SLC6A19 in intestine. Interacts with ITGA5:ITGB1. Probably interacts (via endocytic sorting signal motif) with AP2M1; the interaction is inhibited by phosphorylation of Tyr-781. Interacts (via PDZ-binding motif) with NHERF1 (via PDZ domains); the interaction may enhance ACE2 membrane residence. Requires Zn(2+) as cofactor. The cofactor is chloride. In terms of processing, proteolytic cleavage by ADAM17 generates a secreted form. Also cleaved by serine proteases: TMPRSS2, TMPRSS11D and HPN/TMPRSS1. Phosphorylated. Phosphorylation at Tyr-781 probably inhibits interaction with AP2M1 and enables interactions with proteins containing SH2 domains. Post-translationally, ubiquitinated. Ubiquitinated on Lys-788 via 'Lys-48'-linked ubiquitin. 'Lys-48'-linked deubiquitinated by USP50 on the Lys-788; leading to its stabilization.

It is found in the secreted. It localises to the cell membrane. The protein localises to the cytoplasm. Its subcellular location is the cell projection. The protein resides in the cilium. It is found in the apical cell membrane. The enzyme catalyses angiotensin II + H2O = angiotensin-(1-7) + L-phenylalanine. It catalyses the reaction angiotensin I + H2O = angiotensin-(1-9) + L-leucine. The catalysed reaction is bradykinin(1-8) + H2O = bradykinin(1-7) + L-phenylalanine. It carries out the reaction neurotensin + H2O = neurotensin-(1-12) + L-leucine. The enzyme catalyses kinetensin + H2O = kinetensin-(1-8) + L-leucine. It catalyses the reaction dynorphin A-(1-13) + H2O = dynorphin A-(1-12) + L-lysine. The catalysed reaction is apelin-13 + H2O = apelin-12 + L-phenylalanine. It carries out the reaction [Pyr1]apelin-13 + H2O = [Pyr1]apelin-12 + L-phenylalanine. The enzyme catalyses apelin-17 + H2O = apelin-16 + L-phenylalanine. Essential counter-regulatory carboxypeptidase of the renin-angiotensin hormone system that is a critical regulator of blood volume, systemic vascular resistance, and thus cardiovascular homeostasis. Converts angiotensin I to angiotensin 1-9, a nine-amino acid peptide with anti-hypertrophic effects in cardiomyocytes, and angiotensin II to angiotensin 1-7, which then acts as a beneficial vasodilator and anti-proliferation agent, counterbalancing the actions of the vasoconstrictor angiotensin II. Also removes the C-terminal residue from three other vasoactive peptides, neurotensin, kinetensin, and des-Arg bradykinin, but is not active on bradykinin. Also cleaves other biological peptides, such as apelins, casomorphins and dynorphin A. Plays an important role in amino acid transport by acting as binding partner of amino acid transporter SLC6A19 in intestine, regulating trafficking, expression on the cell surface, and its catalytic activity. In Pongo abelii (Sumatran orangutan), this protein is Angiotensin-converting enzyme 2 (ACE2).